A 550-amino-acid chain; its full sequence is Phospholipase B-like 1 (550 aa).

Residues 1 to 39 (MCHRSHGRSLRPPSPLLLLLPLLLQSPWAAGAAEKHNSA) form the signal peptide. The N-linked (GlcNAc...) (high mannose) asparagine; alternate glycan is linked to Asn-72. A glycan (N-linked (GlcNAc...) (hybrid) asparagine; alternate) is linked at Asn-72. Residues 210–228 (LSPTKSSSLKKFKIWEMGH) constitute a propeptide, removed in mature form. N-linked (GlcNAc...) (high mannose) asparagine; alternate glycosylation is found at Asn-309 and Asn-412. N-linked (GlcNAc...) (hybrid) asparagine; alternate glycosylation is found at Asn-309 and Asn-412. 2 disulfides stabilise this stretch: Cys-471–Cys-476 and Cys-475–Cys-490. The N-linked (GlcNAc...) (high mannose) asparagine; alternate glycan is linked to Asn-527. An N-linked (GlcNAc...) (hybrid) asparagine; alternate glycan is attached at Asn-527.

It belongs to the phospholipase B-like family. May form a homodimer, each monomer is composed of a chain A and a chain B. Post-translationally, the maturation cleavages that produces chains A and B are required to open the putative substrate binding pocket. Both chains A and B remain associated in the mature protein.

It is found in the lysosome. Functionally, exhibits weak phospholipase activity, acting on various phospholipids, including phosphatidylcholine, phosphatidylinositol, phosphatidylethanolamine and lysophospholipids. However, in view of the small size of the putative binding pocket, it has been proposed that it may act rather as an amidase or a peptidase. The chain is Phospholipase B-like 1 (Plbd1) from Rattus norvegicus (Rat).